The chain runs to 244 residues: Mast cell protease 2 (244 aa).

A signal peptide spans 1–18 (MQALLFLMALLLPSGAGA). The propeptide at 19 to 20 (EE) is activation peptide. The 222-residue stretch at 21–242 (IIGGVEAKPH…YLPWIYKVLK (222 aa)) folds into the Peptidase S1 domain. An N-linked (GlcNAc...) asparagine glycan is attached at Asn44. Residues Cys50 and Cys66 are joined by a disulfide bond. Residues His65 and Asp109 each act as charge relay system in the active site. Intrachain disulfides connect Cys143–Cys208 and Cys174–Cys187. Ser202 (charge relay system) is an active-site residue.

Belongs to the peptidase S1 family. Granzyme subfamily. Mucosal mast cells.

This is Mast cell protease 2 (Mcpt2) from Mus musculus (Mouse).